The primary structure comprises 268 residues: Phosphatidylglycerol--prolipoprotein diacylglyceryl transferase (268 aa).

Helical transmembrane passes span 14-34 (LGPI…FAGW), 57-77 (LTFY…IIFY), 90-110 (FFLW…LIAF), and 117-137 (IGAN…IGLG). Position 140 (R140) interacts with a 1,2-diacyl-sn-glycero-3-phospho-(1'-sn-glycerol). A run of 3 helical transmembrane segments spans residues 174-194 (QLFE…LVTI), 200-220 (YLVL…CEFF), and 238-258 (GQIL…AVFI).

Belongs to the Lgt family.

It is found in the cell inner membrane. The catalysed reaction is L-cysteinyl-[prolipoprotein] + a 1,2-diacyl-sn-glycero-3-phospho-(1'-sn-glycerol) = an S-1,2-diacyl-sn-glyceryl-L-cysteinyl-[prolipoprotein] + sn-glycerol 1-phosphate + H(+). It participates in protein modification; lipoprotein biosynthesis (diacylglyceryl transfer). In terms of biological role, catalyzes the transfer of the diacylglyceryl group from phosphatidylglycerol to the sulfhydryl group of the N-terminal cysteine of a prolipoprotein, the first step in the formation of mature lipoproteins. In Francisella tularensis subsp. mediasiatica (strain FSC147), this protein is Phosphatidylglycerol--prolipoprotein diacylglyceryl transferase.